Consider the following 158-residue polypeptide: Naphthalene 1,2-dioxygenase system, small oxygenase component (158 aa).

The protein belongs to the bacterial ring-hydroxylating dioxygenase beta subunit family. The naphthalene dioxygenase (NDO) multicomponent enzyme system is composed of an electron transfer component and a dioxygenase component (iron sulfur protein (ISP)). The electron transfer component is composed of a ferredoxin reductase (NdoR) and a ferredoxin (NdoA), and the dioxygenase component is formed of a heterohexamer (trimer of heterodimers) of three large alpha subunits (NdoB) and three small beta subunits (NdoC).

It participates in aromatic compound metabolism; naphthalene degradation. Component of the naphthalene dioxygenase (NDO) multicomponent enzyme system which catalyzes the incorporation of both atoms of molecular oxygen into naphthalene to form cis-(1R,2S)-dihydroxy-1,2-dihydronaphthalene. The beta subunit seems to have a structural role in the holoenzyme. This chain is Naphthalene 1,2-dioxygenase system, small oxygenase component, found in Pseudomonas fluorescens.